Reading from the N-terminus, the 466-residue chain is Cysteine--tRNA ligase (466 aa).

Residue Cys-28 participates in Zn(2+) binding. The 'HIGH' region motif lies at 30 to 40; it reads PTVYNYIHIGN. Zn(2+)-binding residues include Cys-208, His-233, and Glu-237. The 'KMSKS' region motif lies at 265-269; sequence KMSKS. Position 268 (Lys-268) interacts with ATP.

The protein belongs to the class-I aminoacyl-tRNA synthetase family. As to quaternary structure, monomer. Zn(2+) is required as a cofactor.

The protein localises to the cytoplasm. The catalysed reaction is tRNA(Cys) + L-cysteine + ATP = L-cysteinyl-tRNA(Cys) + AMP + diphosphate. The protein is Cysteine--tRNA ligase of Staphylococcus aureus (strain USA300).